The chain runs to 176 residues: Large ribosomal subunit protein uL10 (176 aa).

Belongs to the universal ribosomal protein uL10 family. As to quaternary structure, part of the ribosomal stalk of the 50S ribosomal subunit. The N-terminus interacts with L11 and the large rRNA to form the base of the stalk. The C-terminus forms an elongated spine to which L12 dimers bind in a sequential fashion forming a multimeric L10(L12)X complex.

Forms part of the ribosomal stalk, playing a central role in the interaction of the ribosome with GTP-bound translation factors. The chain is Large ribosomal subunit protein uL10 from Coprothermobacter proteolyticus (strain ATCC 35245 / DSM 5265 / OCM 4 / BT).